A 389-amino-acid polypeptide reads, in one-letter code: Na(+)/H(+) antiporter NhaA (389 aa).

Transmembrane regions (helical) follow at residues 17-37, 59-79, 95-115, 124-144, 154-174, 177-197, 213-233, 261-281, 292-312, 328-348, and 363-383; these read ILLLIAVAFAMLMANSPLAGF, LLLWINDGLMALFFLLIGLEV, SLPTFAAIGGMLVPAGIYLLF, AGWAIPAATDIAFALGIMALL, VFLLALAIIDDLGVIVIIALF, SDLSTVSLIIASIAIVGLVAL, LILWVAVLKSGVHATLAGVII, FLILPVFAFANAGVALGNMSL, IALGLMLGKPIGVMLFSFVAV, IAPVAAMCGIGFTMSMFIASL, and LGTLMGSIFAALIGYFWLSKV.

Belongs to the NhaA Na(+)/H(+) (TC 2.A.33) antiporter family.

It localises to the cell inner membrane. It carries out the reaction Na(+)(in) + 2 H(+)(out) = Na(+)(out) + 2 H(+)(in). Functionally, na(+)/H(+) antiporter that extrudes sodium in exchange for external protons. The polypeptide is Na(+)/H(+) antiporter NhaA (Shewanella oneidensis (strain ATCC 700550 / JCM 31522 / CIP 106686 / LMG 19005 / NCIMB 14063 / MR-1)).